Consider the following 184-residue polypeptide: Ethylene-responsive transcription factor ERF122 (184 aa).

The AP2/ERF DNA-binding region spans 120-177 (KYKGVRKKPSGKWAAEIWDPRSKSRRWLGTFLTAEMAAQSYNDAAAEYRARRGKTNGE).

It belongs to the AP2/ERF transcription factor family. ERF subfamily.

The protein resides in the nucleus. Its function is as follows. Probably acts as a transcriptional activator. Binds to the GCC-box pathogenesis-related promoter element. May be involved in the regulation of gene expression by stress factors and by components of stress signal transduction pathways. This Arabidopsis thaliana (Mouse-ear cress) protein is Ethylene-responsive transcription factor ERF122 (ERF122).